A 374-amino-acid polypeptide reads, in one-letter code: 5-hydroxytryptamine receptor 1D (374 aa).

Residues 1–35 (MSPPNQSLEGLPQEASNRSLNVTGAWDPEVLQALR) are Extracellular-facing. Residues Asn5, Asn17, and Asn21 are each glycosylated (N-linked (GlcNAc...) asparagine). Residues 36-61 (ISLVVVLSVITLATVLSNAFVLTTIL) form a helical membrane-spanning segment. The Cytoplasmic portion of the chain corresponds to 62 to 72 (LTKKLHTPANY). Residues 73–94 (LIGSLATTDLLVSILVMPISIA) traverse the membrane as a helical segment. At 95–106 (YTTTRTWNFGQI) the chain is on the extracellular side. A helical transmembrane segment spans residues 107 to 131 (LCDIWVSSDITCCTASILHLCVIAL). Cys108 and Cys185 are joined by a disulfide. Serotonin contacts are provided by Asp115 and Cys119. A DRY motif; important for ligand-induced conformation changes motif is present at residues 132–134 (DRY). The Cytoplasmic segment spans residues 132-151 (DRYWAITDALEYSKRRTAGH). The helical transmembrane segment at 152 to 173 (AAAMIAAVWIISICISIPPLFW) threads the bilayer. At 174 to 191 (RQATAHEEMSDCLVNTSQ) the chain is on the extracellular side. The helical transmembrane segment at 192–215 (ISYTIYSTCGAFYIPSILLIILYG) threads the bilayer. Residues 216–297 (RIYVAARSRI…ISAARERKAT (82 aa)) lie on the Cytoplasmic side of the membrane. A helical transmembrane segment spans residues 298 to 323 (KTLGIILGAFIICWLPFFVVSLVLPI). Ser318 is a binding site for serotonin. Topologically, residues 324–332 (CRDSCWIHP) are extracellular. The chain crosses the membrane as a helical span at residues 333-356 (ALFDFFTWLGYLNSLINPVIYTVF). An NPxxY motif; important for ligand-induced conformation changes and signaling motif is present at residues 349–353 (NPVIY). The Cytoplasmic segment spans residues 357-374 (NEDFRQAFQKVVHFRKIS).

The protein belongs to the G-protein coupled receptor 1 family. Homodimer. Heterodimer with HTR1B. Detected in the motor column in spinal cord, and in several cranial motor nuclei, including nucleus ambiguous, oculomotoris, trochelaris and abducens. Detected in gamma motor neurons in the lumbar spinal cord. Detected in proprioceptive sensory neurons in dorsal root ganglia.

The protein resides in the cell membrane. Its function is as follows. G-protein coupled receptor for 5-hydroxytryptamine (serotonin). Also functions as a receptor for ergot alkaloid derivatives, various anxiolytic and antidepressant drugs and other psychoactive substances. Ligand binding causes a conformation change that triggers signaling via guanine nucleotide-binding proteins (G proteins) and modulates the activity of downstream effectors, such as adenylate cyclase. HTR1D is coupled to G(i)/G(o) G alpha proteins and mediates inhibitory neurotransmission by inhibiting adenylate cyclase activity. Regulates the release of 5-hydroxytryptamine in the brain, and thereby affects neural activity. May also play a role in regulating the release of other neurotransmitters. May play a role in vasoconstriction. This is 5-hydroxytryptamine receptor 1D (Htr1d) from Mus musculus (Mouse).